Reading from the N-terminus, the 424-residue chain is Serine hydroxymethyltransferase (424 aa).

Residues L118 and 122–124 (GHL) contribute to the (6S)-5,6,7,8-tetrahydrofolate site. K227 carries the post-translational modification N6-(pyridoxal phosphate)lysine. Residues E243 and 351–353 (SPF) each bind (6S)-5,6,7,8-tetrahydrofolate.

This sequence belongs to the SHMT family. Homodimer. Pyridoxal 5'-phosphate serves as cofactor.

The protein resides in the cytoplasm. It carries out the reaction (6R)-5,10-methylene-5,6,7,8-tetrahydrofolate + glycine + H2O = (6S)-5,6,7,8-tetrahydrofolate + L-serine. It participates in one-carbon metabolism; tetrahydrofolate interconversion. The protein operates within amino-acid biosynthesis; glycine biosynthesis; glycine from L-serine: step 1/1. Functionally, catalyzes the reversible interconversion of serine and glycine with tetrahydrofolate (THF) serving as the one-carbon carrier. This reaction serves as the major source of one-carbon groups required for the biosynthesis of purines, thymidylate, methionine, and other important biomolecules. Also exhibits THF-independent aldolase activity toward beta-hydroxyamino acids, producing glycine and aldehydes, via a retro-aldol mechanism. The polypeptide is Serine hydroxymethyltransferase (Thermosipho africanus (strain TCF52B)).